Consider the following 407-residue polypeptide: Imidazolonepropionase (407 aa).

Fe(3+)-binding residues include His68 and His70. 2 residues coordinate Zn(2+): His68 and His70. Positions 77, 140, and 173 each coordinate 4-imidazolone-5-propanoate. Tyr140 is an N-formimidoyl-L-glutamate binding site. His238 provides a ligand contact to Fe(3+). A Zn(2+)-binding site is contributed by His238. A 4-imidazolone-5-propanoate-binding site is contributed by Gln241. Asp313 lines the Fe(3+) pocket. Asp313 provides a ligand contact to Zn(2+). 2 residues coordinate N-formimidoyl-L-glutamate: Asn315 and Gly317. Thr318 contacts 4-imidazolone-5-propanoate.

This sequence belongs to the metallo-dependent hydrolases superfamily. HutI family. The cofactor is Zn(2+). It depends on Fe(3+) as a cofactor.

The protein localises to the cytoplasm. It carries out the reaction 4-imidazolone-5-propanoate + H2O = N-formimidoyl-L-glutamate. The protein operates within amino-acid degradation; L-histidine degradation into L-glutamate; N-formimidoyl-L-glutamate from L-histidine: step 3/3. In terms of biological role, catalyzes the hydrolytic cleavage of the carbon-nitrogen bond in imidazolone-5-propanoate to yield N-formimidoyl-L-glutamate. It is the third step in the universal histidine degradation pathway. The protein is Imidazolonepropionase of Burkholderia cenocepacia (strain HI2424).